The chain runs to 153 residues: MAPKKDEKPATAEAGAEAPAKAEAKPKAEKAGKKAKKEPAKKAAKEPKGDGEKKDKKKKKSAVETYKLYIYKVLKQVHPDTGISSKAMSIMNSFINDIFEKVATEASKLSRYNKKPTVTSREIQTAVRLVLPGELAKHAVSEGTKAVTKFTSG.

2 stretches are compositionally biased toward basic and acidic residues: residues 1–10 (MAPKKDEKPA) and 20–54 (AKAEAKPKAEKAGKKAKKEPAKKAAKEPKGDGEKK). Residues 1–60 (MAPKKDEKPATAEAGAEAPAKAEAKPKAEKAGKKAKKEPAKKAAKEPKGDGEKKDKKKKK) are disordered. 2 positions are modified to N6-acetyllysine: Lys-41 and Lys-42. Lys-149 is covalently cross-linked (Glycyl lysine isopeptide (Lys-Gly) (interchain with G-Cter in ubiquitin)).

Belongs to the histone H2B family. As to quaternary structure, the nucleosome is a histone octamer containing two molecules each of H2A, H2B, H3 and H4 assembled in one H3-H4 heterotetramer and two H2A-H2B heterodimers. The octamer wraps approximately 147 bp of DNA. The N-terminus is blocked. Post-translationally, can be acetylated to form H2BK33ac and H2BK34ac. Acetylated mainly on the ubiquitinated form. In terms of processing, monoubiquitinated to form H2BK143ub1; which is increased during the light period and may give a specific tag for epigenetic transcriptional activation.

Its subcellular location is the nucleus. It localises to the chromosome. In terms of biological role, core component of nucleosome. Nucleosomes wrap and compact DNA into chromatin, limiting DNA accessibility to the cellular machineries which require DNA as a template. Histones thereby play a central role in transcription regulation, DNA repair, DNA replication and chromosomal stability. DNA accessibility is regulated via a complex set of post-translational modifications of histones, also called histone code, and nucleosome remodeling. The protein is Histone H2B.3 of Chlamydomonas reinhardtii (Chlamydomonas smithii).